The sequence spans 352 residues: Histidinol-phosphate aminotransferase (352 aa).

The residue at position 221 (Lys221) is an N6-(pyridoxal phosphate)lysine.

Belongs to the class-II pyridoxal-phosphate-dependent aminotransferase family. Histidinol-phosphate aminotransferase subfamily. In terms of assembly, homodimer. It depends on pyridoxal 5'-phosphate as a cofactor.

The catalysed reaction is L-histidinol phosphate + 2-oxoglutarate = 3-(imidazol-4-yl)-2-oxopropyl phosphate + L-glutamate. The protein operates within amino-acid biosynthesis; L-histidine biosynthesis; L-histidine from 5-phospho-alpha-D-ribose 1-diphosphate: step 7/9. This chain is Histidinol-phosphate aminotransferase, found in Staphylococcus aureus (strain Mu3 / ATCC 700698).